We begin with the raw amino-acid sequence, 605 residues long: 9-cis-epoxycarotenoid dioxygenase NCED1, chloroplastic (605 aa).

Residues 1–16 (MATTTSHATNTWIKTK) constitute a chloroplast transit peptide. The disordered stretch occupies residues 55 to 89 (ILHFPKQSSNYQTPKNNTISHPKQENNNSSSSSTS). A compositionally biased stretch (polar residues) spans 60–75 (KQSSNYQTPKNNTISH). Over residues 80–89 (NNNSSSSSTS) the composition is skewed to low complexity. Residues His-302, His-351, His-416, and His-592 each contribute to the Fe cation site.

The protein belongs to the carotenoid oxygenase family. Requires Fe(2+) as cofactor. As to expression, expressed in developing and ripening fruits. Highly expressed in pulp. Observed in unpollinated ovaries (e.g. ovules, placenta and pericarp). Expressed in flowers.

It localises to the plastid. It is found in the chloroplast stroma. The enzyme catalyses a 9-cis-epoxycarotenoid + O2 = a 12'-apo-carotenal + 2-cis,4-trans-xanthoxin. It carries out the reaction 9-cis-violaxanthin + O2 = (3S,5R,6S)-5,6-epoxy-3-hydroxy-5,6-dihydro-12'-apo-beta-caroten-12'-al + 2-cis,4-trans-xanthoxin. The catalysed reaction is 9'-cis-neoxanthin + O2 = (3S,5R,6R)-3,5-dihydroxy-6,7-didehydro-5,6-dihydro-12'-apo-beta-caroten-12'-al + 2-cis,4-trans-xanthoxin. It participates in plant hormone biosynthesis; abscisate biosynthesis. Its function is as follows. Has a 11,12(11',12') 9-cis epoxycarotenoid cleavage activity. Catalyzes the first step of abscisic-acid (ABA) biosynthesis from carotenoids. Required for ABA accumulation upon drought. Required for ABA-mediated regulation of anther/pollen development, including metabolism, cell wall modification and transcription level. Positive regulator of fruit ripening involved in the biosynthesis of abscisic acid (ABA); initiates ABA biosynthesis at the onset of fruit ripening. Modulates the degree of pigmentation and carotenoid composition as well as pectin catabolism during ripening and may regulate the ethylene production and action in climacteric tomato fruit. The protein is 9-cis-epoxycarotenoid dioxygenase NCED1, chloroplastic of Solanum lycopersicum (Tomato).